Consider the following 212-residue polypeptide: MRIGILGGTFDPIHYGHIRPAMEVKASLKLDKILLMPNHIPPHKNTTHSSTAQRLEMVAQVCEALTGFELCDIEAKRDSPSYTVVTLQQLSRLYPDDELFFIMGMDSFIHLQSWHKWLQLFELANIVVCQRPGWHLAEGHPMQHELSARHATLEALSHSSEPQHGRIFTVDISPQDISSTQIRSQLAMGEIPQDALLPVTLNYIQKQRLYFS.

The protein belongs to the NadD family.

It catalyses the reaction nicotinate beta-D-ribonucleotide + ATP + H(+) = deamido-NAD(+) + diphosphate. Its pathway is cofactor biosynthesis; NAD(+) biosynthesis; deamido-NAD(+) from nicotinate D-ribonucleotide: step 1/1. In terms of biological role, catalyzes the reversible adenylation of nicotinate mononucleotide (NaMN) to nicotinic acid adenine dinucleotide (NaAD). The sequence is that of Probable nicotinate-nucleotide adenylyltransferase from Shewanella sp. (strain ANA-3).